A 290-amino-acid chain; its full sequence is Elongation factor Ts (290 aa).

The interval 79 to 82 (TDFV) is involved in Mg(2+) ion dislocation from EF-Tu.

Belongs to the EF-Ts family.

It is found in the cytoplasm. Its function is as follows. Associates with the EF-Tu.GDP complex and induces the exchange of GDP to GTP. It remains bound to the aminoacyl-tRNA.EF-Tu.GTP complex up to the GTP hydrolysis stage on the ribosome. The sequence is that of Elongation factor Ts from Pseudoalteromonas atlantica (strain T6c / ATCC BAA-1087).